Consider the following 120-residue polypeptide: NAD(P)H-quinone oxidoreductase subunit 3 (120 aa).

The next 3 helical transmembrane spans lie at 10 to 30 (FLGF…TNLI), 64 to 84 (MFAL…PWAV), and 89 to 109 (LGLL…IALA).

Belongs to the complex I subunit 3 family. In terms of assembly, NDH-1 can be composed of about 15 different subunits; different subcomplexes with different compositions have been identified which probably have different functions.

It localises to the cellular thylakoid membrane. The enzyme catalyses a plastoquinone + NADH + (n+1) H(+)(in) = a plastoquinol + NAD(+) + n H(+)(out). It carries out the reaction a plastoquinone + NADPH + (n+1) H(+)(in) = a plastoquinol + NADP(+) + n H(+)(out). Functionally, NDH-1 shuttles electrons from an unknown electron donor, via FMN and iron-sulfur (Fe-S) centers, to quinones in the respiratory and/or the photosynthetic chain. The immediate electron acceptor for the enzyme in this species is believed to be plastoquinone. Couples the redox reaction to proton translocation, and thus conserves the redox energy in a proton gradient. Cyanobacterial NDH-1 also plays a role in inorganic carbon-concentration. The sequence is that of NAD(P)H-quinone oxidoreductase subunit 3 from Prochlorococcus marinus subsp. pastoris (strain CCMP1986 / NIES-2087 / MED4).